A 234-amino-acid chain; its full sequence is Pepsin inhibitor Dit33 (234 aa).

Positions methionine 1–alanine 17 are cleaved as a signal peptide. Cysteine 135 and cysteine 230 are joined by a disulfide. A disordered region spans residues arginine 200–glutamate 222. Polar residues predominate over residues serine 204–alanine 219.

This sequence belongs to the protease inhibitor I33 family.

Its subcellular location is the secreted. Aspartyl protease inhibitor. In Dirofilaria immitis (Canine heartworm), this protein is Pepsin inhibitor Dit33 (DIT33).